The chain runs to 242 residues: Exosome complex component ski6 (242 aa).

This sequence belongs to the RNase PH family. Component of the RNA exosome complex. Specifically part of the catalytically inactive RNA exosome core complex (Exo-9) which may associate with the catalytic subunits rrp6 and dis3 in cytoplasmic- and nuclear-specific RNA exosome complex forms. Exo-9 is formed by a hexameric base ring of RNase PH domain-containing subunits and a cap ring consisting of csl4, rrp4 and rrp40.

The protein localises to the cytoplasm. It is found in the nucleus. Its subcellular location is the nucleolus. Its function is as follows. Non-catalytic component of the RNA exosome complex which has 3'-&gt;5' exoribonuclease activity and participates in a multitude of cellular RNA processing and degradation events. In the nucleus, the RNA exosome complex is involved in proper maturation of stable RNA species such as rRNA, snRNA and snoRNA, in the elimination of RNA processing by-products and non-coding 'pervasive' transcripts, such as antisense RNA species and cryptic unstable transcripts (CUTs), and of mRNAs with processing defects, thereby limiting or excluding their export to the cytoplasm. In the cytoplasm, the RNA exosome complex is involved in general mRNA turnover and in RNA surveillance pathways, preventing translation of aberrant mRNAs. The catalytic inactive RNA exosome core complex of 9 subunits (Exo-9) is proposed to play a pivotal role in the binding and presentation of RNA for ribonucleolysis, and to serve as a scaffold for the association with catalytic subunits and accessory proteins or complexes. ski6 is part of the hexameric ring of RNase PH domain-containing subunits proposed to form a central channel which threads RNA substrates for degradation. This chain is Exosome complex component ski6 (ski6), found in Schizosaccharomyces pombe (strain 972 / ATCC 24843) (Fission yeast).